The chain runs to 316 residues: Ribosomal RNA small subunit methyltransferase A (316 aa).

S-adenosyl-L-methionine contacts are provided by Asn33, Val35, Gly60, Glu81, Asp110, and Asn133.

This sequence belongs to the class I-like SAM-binding methyltransferase superfamily. rRNA adenine N(6)-methyltransferase family. RsmA subfamily.

Its subcellular location is the cytoplasm. It carries out the reaction adenosine(1518)/adenosine(1519) in 16S rRNA + 4 S-adenosyl-L-methionine = N(6)-dimethyladenosine(1518)/N(6)-dimethyladenosine(1519) in 16S rRNA + 4 S-adenosyl-L-homocysteine + 4 H(+). Its function is as follows. Specifically dimethylates two adjacent adenosines (A1518 and A1519) in the loop of a conserved hairpin near the 3'-end of 16S rRNA in the 30S particle. May play a critical role in biogenesis of 30S subunits. The polypeptide is Ribosomal RNA small subunit methyltransferase A (Corynebacterium jeikeium (strain K411)).